The sequence spans 359 residues: Alanine racemase (359 aa).

Lys34 functions as the Proton acceptor; specific for D-alanine in the catalytic mechanism. At Lys34 the chain carries N6-(pyridoxal phosphate)lysine. Residue Arg129 participates in substrate binding. Tyr256 serves as the catalytic Proton acceptor; specific for L-alanine. Residue Met304 participates in substrate binding.

Belongs to the alanine racemase family. Requires pyridoxal 5'-phosphate as cofactor.

It catalyses the reaction L-alanine = D-alanine. Its pathway is amino-acid biosynthesis; D-alanine biosynthesis; D-alanine from L-alanine: step 1/1. Its function is as follows. Catalyzes the interconversion of L-alanine and D-alanine. May also act on other amino acids. This chain is Alanine racemase (alr), found in Photobacterium profundum (strain SS9).